Here is a 750-residue protein sequence, read N- to C-terminus: Photosystem I P700 chlorophyll a apoprotein A1 (750 aa).

The next 8 membrane-spanning stretches (helical) occupy residues 70-93 (VFSAHFGQLSIIFLWLSGMYFHGA), 156-179 (LYCTAIGALVFASLMLFAGWFHYH), 195-219 (LNHHLAGLLGLGSLSWAGHQIHVSL), 291-309 (IAHHHLAIAILFLIAGHMY), 346-369 (WHAQLSLNLAMLGSLTIVVAHHMY), 385-411 (LSLFTHHMWIGGFLIVGAAAHAAIFMV), 433-455 (AIISHLNWACIFLGFHSFGLYIH), and 531-549 (FLVHHIHAFTIHVTVLILL). The [4Fe-4S] cluster site is built by Cys-573 and Cys-582. Transmembrane regions (helical) follow at residues 589–610 (HVFLGLFWMYNAISVVIFHFSW) and 664–686 (LSAYGLFFLGAHFVWAFSLMFLF). A chlorophyll a'-binding site is contributed by His-675. 2 residues coordinate chlorophyll a: Met-683 and Tyr-691. Trp-692 contributes to the phylloquinone binding site. The chain crosses the membrane as a helical span at residues 724–744 (AVGVTHYLLGGIATTWAFFLA).

The protein belongs to the PsaA/PsaB family. The PsaA/B heterodimer binds the P700 chlorophyll special pair and subsequent electron acceptors. PSI consists of a core antenna complex that captures photons, and an electron transfer chain that converts photonic excitation into a charge separation. The eukaryotic PSI reaction center is composed of at least 11 subunits. The cofactor is P700 is a chlorophyll a/chlorophyll a' dimer, A0 is one or more chlorophyll a, A1 is one or both phylloquinones and FX is a shared 4Fe-4S iron-sulfur center..

It localises to the plastid. The protein resides in the chloroplast thylakoid membrane. It carries out the reaction reduced [plastocyanin] + hnu + oxidized [2Fe-2S]-[ferredoxin] = oxidized [plastocyanin] + reduced [2Fe-2S]-[ferredoxin]. Its function is as follows. PsaA and PsaB bind P700, the primary electron donor of photosystem I (PSI), as well as the electron acceptors A0, A1 and FX. PSI is a plastocyanin-ferredoxin oxidoreductase, converting photonic excitation into a charge separation, which transfers an electron from the donor P700 chlorophyll pair to the spectroscopically characterized acceptors A0, A1, FX, FA and FB in turn. Oxidized P700 is reduced on the lumenal side of the thylakoid membrane by plastocyanin. In Phalaenopsis aphrodite subsp. formosana (Moth orchid), this protein is Photosystem I P700 chlorophyll a apoprotein A1.